The primary structure comprises 458 residues: MSTGKIIQVIGAVIDVEFSRDNTPKVYDALNVKEANLVLEVQQQIGDGVVRTIAMGSSDGLRRGMVVENTNAPISVPVGHGTLGRIMNVLGEPIDEAGPIQYTETRSIHQAPPAYDELALSTEILETGIKVVDLICPFAKGGKVGLFGGAGVGKTVTMMELINNIAKEHSGYSVFAGVGERTREGNDFYYEMKDSNVLDKVALVYGQMNEPPGNRLRVALSGLTIAEGFRDEKRDVLMFIDNIYRYTLAGTEVSALLGRMPSAVGYQPTLAAEMGALQERITSTKTGSITSVQAVYVPADDLTDPSPATTFSHLDATIVLSRQIAELGIYPAVDPLDSTSRQLDPLVVGHDHYETARAVQKVLQRYKELKDIIAILGMDELSDEDKRTVDRARKIQRFLSQPFHVAEVFTGNPGKFVSLKDTVASFKAIVNGEYDHLPEQAFYMVGSIQEAIEKAKTL.

148 to 155 serves as a coordination point for ATP; the sequence is GGAGVGKT.

It belongs to the ATPase alpha/beta chains family. As to quaternary structure, F-type ATPases have 2 components, CF(1) - the catalytic core - and CF(0) - the membrane proton channel. CF(1) has five subunits: alpha(3), beta(3), gamma(1), delta(1), epsilon(1). CF(0) has three main subunits: a(1), b(2) and c(9-12). The alpha and beta chains form an alternating ring which encloses part of the gamma chain. CF(1) is attached to CF(0) by a central stalk formed by the gamma and epsilon chains, while a peripheral stalk is formed by the delta and b chains.

The protein localises to the cell inner membrane. It carries out the reaction ATP + H2O + 4 H(+)(in) = ADP + phosphate + 5 H(+)(out). In terms of biological role, produces ATP from ADP in the presence of a proton gradient across the membrane. The catalytic sites are hosted primarily by the beta subunits. This is ATP synthase subunit beta from Francisella philomiragia subsp. philomiragia (strain ATCC 25017 / CCUG 19701 / FSC 153 / O#319-036).